The sequence spans 264 residues: 3-methyl-2-oxobutanoate hydroxymethyltransferase (264 aa).

Mg(2+) contacts are provided by aspartate 45 and aspartate 84. 3-methyl-2-oxobutanoate is bound by residues aspartate 45 to serine 46, aspartate 84, and lysine 113. A Mg(2+)-binding site is contributed by glutamate 115. Residue glutamate 182 is the Proton acceptor of the active site.

This sequence belongs to the PanB family. Homodecamer; pentamer of dimers. It depends on Mg(2+) as a cofactor.

The protein resides in the cytoplasm. It catalyses the reaction 3-methyl-2-oxobutanoate + (6R)-5,10-methylene-5,6,7,8-tetrahydrofolate + H2O = 2-dehydropantoate + (6S)-5,6,7,8-tetrahydrofolate. Its pathway is cofactor biosynthesis; (R)-pantothenate biosynthesis; (R)-pantoate from 3-methyl-2-oxobutanoate: step 1/2. Catalyzes the reversible reaction in which hydroxymethyl group from 5,10-methylenetetrahydrofolate is transferred onto alpha-ketoisovalerate to form ketopantoate. The protein is 3-methyl-2-oxobutanoate hydroxymethyltransferase of Caldicellulosiruptor saccharolyticus (strain ATCC 43494 / DSM 8903 / Tp8T 6331).